The chain runs to 157 residues: UPF0251 protein CLK_0815 (157 aa).

This sequence belongs to the UPF0251 family.

The protein is UPF0251 protein CLK_0815 of Clostridium botulinum (strain Loch Maree / Type A3).